A 133-amino-acid polypeptide reads, in one-letter code: Minor spike protein H (133 aa).

This sequence belongs to the microviridae H protein family.

The protein resides in the virion. Its function is as follows. Probably triggers with protein G the injection of the phage DNA into the host upon conformational changes induced by virus-host receptor interaction. The chain is Minor spike protein H from Spiroplasma virus 4 (SpV4).